The primary structure comprises 235 residues: Orotidine 5'-phosphate decarboxylase (235 aa).

Substrate-binding positions include aspartate 17, lysine 39, 66–75 (DLKLHDIGNT), threonine 121, arginine 182, glutamine 191, glycine 211, and arginine 212. The active-site Proton donor is the lysine 68.

The protein belongs to the OMP decarboxylase family. Type 1 subfamily. In terms of assembly, homodimer.

It catalyses the reaction orotidine 5'-phosphate + H(+) = UMP + CO2. It participates in pyrimidine metabolism; UMP biosynthesis via de novo pathway; UMP from orotate: step 2/2. Functionally, catalyzes the decarboxylation of orotidine 5'-monophosphate (OMP) to uridine 5'-monophosphate (UMP). The polypeptide is Orotidine 5'-phosphate decarboxylase (Rhodopseudomonas palustris (strain HaA2)).